A 437-amino-acid polypeptide reads, in one-letter code: Pterin deaminase (437 aa).

A divalent metal cation is bound by residues H80 and H82. K85 is a binding site for substrate. A divalent metal cation is bound at residue H231. E234 (proton donor) is an active-site residue. D331 contributes to the a divalent metal cation binding site. Residue 331–332 (DN) coordinates substrate.

This sequence belongs to the metallo-dependent hydrolases superfamily. Pterin deaminase family. It depends on a divalent metal cation as a cofactor.

The catalysed reaction is a 2-amino-4-hydroxypteridine + H2O + H(+) = a 2,4-dihydroxypteridine + NH4(+). The enzyme catalyses L-sepiapterin + H2O + H(+) = (S)-xanthopterin-B2 + NH4(+). Catalyzes the deamination of many pterin metabolites, such as formylpterin, pterin-6-carboxylate, pterin-7-carboxylate, pterin, hydroxymethylpterin, biopterin, D-(+)-neopterin, isoxanthopterin, sepiapterin, folate, xanthopterin, and 7,8-dihydrohydroxymethylpterin. May be involved in a degradative pathway for catabolizing pterin rings. The chain is Pterin deaminase from Rhizobium rhizogenes (strain K84 / ATCC BAA-868) (Agrobacterium radiobacter).